The following is a 62-amino-acid chain: Large ribosomal subunit protein bL33 (62 aa).

Belongs to the bacterial ribosomal protein bL33 family.

The chain is Large ribosomal subunit protein bL33 from Bacteroides fragilis (strain ATCC 25285 / DSM 2151 / CCUG 4856 / JCM 11019 / LMG 10263 / NCTC 9343 / Onslow / VPI 2553 / EN-2).